The following is a 1260-amino-acid chain: Kinesin-like protein KIN-14E (1260 aa).

A MyTH4 domain is found at 115 to 274 (FQKDPIPTSL…PGREEIEALL (160 aa)). An FERM domain is found at 279–593 (LTTIVFFLDE…HINDVMLRRY (315 aa)). Coiled coils occupy residues 615–676 (QNFE…LLEV) and 753–853 (SKRL…TAAI). Residues 888 to 1209 (KIRVYCRIRP…LLYASRVRTI (322 aa)) form the Kinesin motor domain. 972-977 (GSGKTF) contributes to the ATP binding site. A calmodulin-binding region spans residues 1217–1239 (ISSKEMVRLKKLVAYWKEQAGKK). A homodimerization domain region spans residues 1221–1260 (EMVRLKKLVAYWKEQAGKKGEEEDLVDIEEDRTRKDEADS). Residues 1236 to 1260 (AGKKGEEEDLVDIEEDRTRKDEADS) form a disordered region. Residues 1251-1260 (DRTRKDEADS) show a composition bias toward basic and acidic residues.

It belongs to the TRAFAC class myosin-kinesin ATPase superfamily. Kinesin family. KIN-14 subfamily. Homodimer (via C-terminus). Binds microtubules via its N-terminus containing the MyTH4 domain and binds F-actin via its FERM domain. Interacts with KIPK1. Interacts with KIPK2. Interacts with AN. Interacts with AIR9. Interacts (via C-terminus) with KIC, CAM2, CAM4 and CAM6. KIC and calmodulin show competitive binding to KCBP. Binding to calmodulin inhibits microtubule binding activity. Binding to KIC inhibits microtubule binding activity and microtubule-stimulated ATPase activity. As to expression, widely expressed with the highest levels in flowers. Strongly expressed in the root tip. Highly detected in the branch apex of the trichome.

The protein resides in the cytoplasm. The protein localises to the cell cortex. It localises to the cytoskeleton. It is found in the spindle. Its subcellular location is the phragmoplast. Functionally, minus-end microtubule-dependent motor protein involved in the regulation of cell division and trichome morphogenesis through microtubules bundling. Possesses basal and microtubule-stimulated ATPase activities. Acts as a hub that brings together microtubules and actin filaments to modulate the cytoskeleton during trichome formation and morphogenesis. Could be involved in the negative regulation of root growth. The polypeptide is Kinesin-like protein KIN-14E (Arabidopsis thaliana (Mouse-ear cress)).